The following is a 469-amino-acid chain: Alpha-galactosidase (469 aa).

The N-terminal stretch at 1 to 17 is a signal peptide; it reads MFPFFFALFFSSTDVLA. A disulfide bond links Cys41 and Cys73. Substrate contacts are provided by Asp71 and Asp72. Asn81 carries N-linked (GlcNAc...) asparagine glycosylation. Cys120 and Cys150 are joined by a disulfide. Substrate is bound at residue Lys146. Catalysis depends on Asp148, which acts as the Nucleophile. Residue Asn174 is glycosylated (N-linked (GlcNAc...) asparagine). Arg204 serves as a coordination point for substrate. Asp208 functions as the Proton donor in the catalytic mechanism. Disulfide bonds link Cys220–Cys236 and Cys222–Cys229. Gln250 is a substrate binding site. 7 N-linked (GlcNAc...) asparagine glycosylation sites follow: Asn269, Asn369, Asn402, Asn412, Asn421, Asn426, and Asn434.

The protein belongs to the glycosyl hydrolase 27 family. In terms of assembly, homotetramer.

It localises to the secreted. It carries out the reaction Hydrolysis of terminal, non-reducing alpha-D-galactose residues in alpha-D-galactosides, including galactose oligosaccharides, galactomannans and galactolipids.. This chain is Alpha-galactosidase (MEL), found in Lachancea cidri (Yeast).